The sequence spans 172 residues: Protein-export protein SecB (172 aa).

Belongs to the SecB family. Homotetramer, a dimer of dimers. One homotetramer interacts with 1 SecA dimer.

The protein localises to the cytoplasm. In terms of biological role, one of the proteins required for the normal export of preproteins out of the cell cytoplasm. It is a molecular chaperone that binds to a subset of precursor proteins, maintaining them in a translocation-competent state. It also specifically binds to its receptor SecA. The chain is Protein-export protein SecB from Maricaulis maris (strain MCS10) (Caulobacter maris).